The primary structure comprises 727 residues: MPIVGNAGAGSVGAKPGSWLPEWKRIVVLLGSWTLGVRENEKGSGSRLIKWNGSGSREQKICKTTLPLFQACIKHLNSRDLLSTKVLTLALYKYILRAPQTAPHPPAAPPRTEVASSTAGRASRTKSASSTGRVSRANPASFHRPRLLRQAGLHLRRPRLSRQAGLRCHRLHLSAPSRSPTPPPNAVAPSSCSRLPRARLAIRGRRASSHSATVDTACSRRHSCDCLNRHRHLAVVATSAVAATTVAVPTACLCCGQIPLGRHRHNQAVTGRDLTVAALVLLAEVARETTGYSNGAPDPAAVVAISCCRPGSIPPSTAAAGSCRRHPAAVTARWPLAGGARSGRRDNPRRQGTGATRTGISKTYVSSVVAKTLALQELKGNIRVFCRVRPLLPNESGAVAYPKSGENLGRGIELTHNGQMYFFTFDKVFEQSTSQEDVFIEISHLVQSALDGYKVCIFAYGQTGSGKTYTMMGNPELHDQKGLIPRSLEQIFQTSQALISQGWKYKMQASMLEIYNEAICDLLATNHTTIQDGGASKYSIKHDANGNTHVSDLIIVDVLSINEVSSLLKRAAQSRSVGRTQMNEESSRSHCVFTLRFFGVNEGTDQQVQGVLNLIDLAGSERLNKSGATGDRLKETQAINKSLSCLSDVIFSIAKKEEHVPFRNSKLTYLLQPCLGGDSKTLMFVNLSPEVSSTGESICSLRFAARVNSCEIGIPRRQTQVRSLAQG.

3 disordered regions span residues 100 to 156 (QTAP…LHLR), 172 to 194 (HLSA…SCSR), and 336 to 357 (LAGG…GATR). A compositionally biased stretch (polar residues) spans 114-133 (VASSTAGRASRTKSASSTGR). A Kinesin motor domain is found at 381 to 710 (NIRVFCRVRP…LRFAARVNSC (330 aa)). 461–468 (GQTGSGKT) is a binding site for ATP.

Belongs to the TRAFAC class myosin-kinesin ATPase superfamily. Kinesin family. KIN-14 subfamily.

In Oryza sativa subsp. japonica (Rice), this protein is Kinesin-like protein KIN-14G.